The following is a 386-amino-acid chain: Porin PorA (386 aa).

An N-terminal signal peptide occupies residues 1–35 (MKRTLGHALIIIGAALIVIAVLLPTFLVPRLRVIP). Residues 53-63 (DSSQLGKNEPT) show a composition bias toward polar residues. The segment at 53-78 (DSSQLGKNEPTPNRKNDPRCKAETDE) is disordered. The segment covering 64 to 78 (PNRKNDPRCKAETDE) has biased composition (basic and acidic residues).

The protein belongs to the PorA family.

Its subcellular location is the secreted. The protein resides in the cell wall. Its function is as follows. Forms water-filled channels that favor the permeation of cations. The chain is Porin PorA from Corynebacterium amycolatum.